Here is a 98-residue protein sequence, read N- to C-terminus: Feather beta keratin (98 aa).

Position 2 is an N-acetylserine (S2).

It belongs to the avian keratin family. In terms of assembly, the avian keratins (F-ker, S-ker, C-ker and B-ker) are a complex mixture of very similar polypeptides.

The sequence is that of Feather beta keratin from Mycteria americana (Wood stork).